Consider the following 543-residue polypeptide: Neurofilament light polypeptide (543 aa).

Ser-2 bears the N-acetylserine mark. The tract at residues 2–92 (SSFSYEPYYS…LKSIRTQEKA (91 aa)) is head. O-linked (GlcNAc) threonine glycosylation is present at Thr-21. Arg-23 is modified (asymmetric dimethylarginine; alternate). The residue at position 23 (Arg-23) is an Omega-N-methylarginine; alternate. Ser-27 is a glycosylation site (O-linked (GlcNAc) serine). Arg-30 carries the post-translational modification Omega-N-methylarginine. Phosphotyrosine is present on Tyr-43. A phosphoserine mark is found at Ser-56, Ser-67, and Ser-103. Residues 90 to 400 (EKAQLQDLND…KLLEGEETRL (311 aa)) form the IF rod domain. Residues 93-124 (QLQDLNDRFASFIERVHELEQQNKVLEAELLV) are coil 1A. Residues 125–137 (LRQKHSEPSRFRA) are linker 1. Residues 138-234 (LYEQEIRDLR…KVHEEEIAEL (97 aa)) are coil 1B. The interval 235–252 (QAQIQYAQISVEMDVTKP) is linker 12. Positions 253 to 271 (DLSAALKDIRAQYEKLAAK) are coil 2A. A linker 2 region spans residues 272 to 280 (NMQNAEEWF). A coil 2B region spans residues 281–396 (KSRFTVLTES…AAYRKLLEGE (116 aa)). The epitope; recognized by IF-specific monoclonal antibody stretch occupies residues 381-391 (ALDIEIAAYRK). The interval 397–443 (ETRLSFTSVGSITSGYSQSSQVFGRSAYGGLQTSSYLMSTRSFPSYY) is tail, subdomain A. The tract at residues 397 to 543 (ETRLSFTSVG…GEEQAAKKKD (147 aa)) is tail. The segment at 444–543 (TSHVQEEQIE…GEEQAAKKKD (100 aa)) is tail, subdomain B (acidic). Residues 462 to 543 (KAEEAKDEPP…GEEQAAKKKD (82 aa)) form a disordered region. The segment covering 471 to 525 (PSEGEAEEEEKDKEEAEEEEAAEEEEAAKEESEEAKEEEEGGEGEEGEETKEAEE) has biased composition (acidic residues). A phosphoserine mark is found at Ser-472 and Ser-502. Thr-520 bears the Phosphothreonine mark. The segment covering 526-543 (EEKKVEGAGEEQAAKKKD) has biased composition (basic and acidic residues).

Belongs to the intermediate filament family. Forms homodimers (in vitro). Forms heterodimers with NEFH or NEFM; which can further hetero-oligomerize (in vitro). Forms heterodimers with INA (in vitro). Interacts with ARHGEF28. Interacts with TRIM2. In terms of processing, O-glycosylated. Phosphorylated in the head and rod regions by the PKC kinase PKN1, leading to the inhibition of polymerization. Post-translationally, ubiquitinated in the presence of TRIM2 and UBE2D1.

Its subcellular location is the cell projection. It is found in the axon. The protein localises to the cytoplasm. It localises to the cytoskeleton. Functionally, neurofilaments usually contain three intermediate filament proteins: NEFL, NEFM, and NEFH which are involved in the maintenance of neuronal caliber. May additionally cooperate with the neuronal intermediate filament proteins PRPH and INA to form neuronal filamentous networks. This Homo sapiens (Human) protein is Neurofilament light polypeptide (NEFL).